A 164-amino-acid chain; its full sequence is Phosphatidyl-N-methylethanolamine N-methyltransferase (164 aa).

The helical intramembrane region spans 1–21 (MGLLAAIGVLLPFPFYWWLWT). Topologically, residues 22 to 30 (NAQSWVNLC) are lumenal. A helical transmembrane segment spans residues 31–52 (GRERDPSTVMARVSHVLKAAQL). Residues 53 to 69 (LSLFSVASLSWPPPLYF) are Cytoplasmic-facing. Residues 70–90 (WPLMAFGQFLNFRVYQLLGEA) form a helical membrane-spanning segment. 74–76 (AFG) provides a ligand contact to S-adenosyl-L-methionine. Topologically, residues 91-131 (GTYYGVRFGKNIPWVTEFPFGVIRDPQYVGSIMSLLACLSW) are lumenal. A helical membrane pass occupies residues 132–151 (VPFQYILLWSLGYVFMMFLE). Residues 152–164 (SKEDPNARAKSIS) lie on the Cytoplasmic side of the membrane. 154–155 (ED) lines the S-adenosyl-L-methionine pocket.

The protein belongs to the class VI-like SAM-binding methyltransferase superfamily. PEMT/PEM2 methyltransferase family.

Its subcellular location is the endoplasmic reticulum membrane. The catalysed reaction is a 1,2-diacyl-sn-glycero-3-phospho-N-methylethanolamine + S-adenosyl-L-methionine = a 1,2-diacyl-sn-glycero-3-phospho-N,N-dimethylethanolamine + S-adenosyl-L-homocysteine + H(+). The enzyme catalyses a 1,2-diacyl-sn-glycero-3-phospho-N,N-dimethylethanolamine + S-adenosyl-L-methionine = a 1,2-diacyl-sn-glycero-3-phosphocholine + S-adenosyl-L-homocysteine + H(+). It participates in phospholipid metabolism; phosphatidylcholine biosynthesis. In terms of biological role, catalyzes the second two steps of the methylation pathway of phosphatidylcholine biosynthesis, the SAM-dependent methylation of phosphatidylmonomethylethanolamine (PMME) to phosphatidyldimethylethanolamine (PDME) and of PDME to phosphatidylcholine (PC). In Arabidopsis thaliana (Mouse-ear cress), this protein is Phosphatidyl-N-methylethanolamine N-methyltransferase (PLMT).